Here is a 209-residue protein sequence, read N- to C-terminus: Lipid A acyltransferase PagP (209 aa).

An N-terminal signal peptide occupies residues 1–24 (MHLKRALITLSLITLPIIPFSSYA). Active-site residues include His81, Asp124, and Ser125.

Belongs to the lipid A palmitoyltransferase family. As to quaternary structure, homodimer.

The protein localises to the cell outer membrane. It catalyses the reaction a lipid A + a 1,2-diacyl-sn-glycero-3-phosphocholine = a hepta-acyl lipid A + a 2-acyl-sn-glycero-3-phosphocholine. It carries out the reaction a lipid IVA + a 1,2-diacyl-sn-glycero-3-phosphocholine = a lipid IVB + a 2-acyl-sn-glycero-3-phosphocholine. The enzyme catalyses a lipid IIA + a 1,2-diacyl-sn-glycero-3-phosphocholine = a lipid IIB + a 2-acyl-sn-glycero-3-phosphocholine. Its function is as follows. Transfers a fatty acid residue from the sn-1 position of a phospholipid to the N-linked hydroxyfatty acid chain on the proximal unit of lipid A or its precursors. This Pectobacterium parmentieri (strain WPP163) (Pectobacterium wasabiae (strain WPP163)) protein is Lipid A acyltransferase PagP.